The following is a 354-amino-acid chain: Elongation factor Ts (354 aa).

Residues 81–84 (TDFV) are involved in Mg(2+) ion dislocation from EF-Tu.

It belongs to the EF-Ts family.

The protein localises to the cytoplasm. In terms of biological role, associates with the EF-Tu.GDP complex and induces the exchange of GDP to GTP. It remains bound to the aminoacyl-tRNA.EF-Tu.GTP complex up to the GTP hydrolysis stage on the ribosome. The protein is Elongation factor Ts of Campylobacter concisus (strain 13826).